Consider the following 229-residue polypeptide: Cytochrome c oxidase subunit 2 (229 aa).

Topologically, residues 1–26 (MSTWANLGLQDSASPLMEQLIFFHDH) are mitochondrial intermembrane. A helical transmembrane segment spans residues 27 to 48 (ALLILVMITILVGYLMFMLFFN). The Mitochondrial matrix segment spans residues 49–62 (SYINRFLLHGQLIE). Residues 63–82 (MIWTILPAIILLFIAMPSLR) form a helical membrane-spanning segment. Residues 83-229 (LLYLLDEINE…IKWIASKVNS (147 aa)) are Mitochondrial intermembrane-facing. The Cu cation site is built by H161, C196, E198, C200, H204, and M207. Residue E198 coordinates Mg(2+).

This sequence belongs to the cytochrome c oxidase subunit 2 family. Component of the cytochrome c oxidase (complex IV, CIV), a multisubunit enzyme composed of a catalytic core of 3 subunits and several supernumerary subunits. The complex exists as a monomer or a dimer and forms supercomplexes (SCs) in the inner mitochondrial membrane with ubiquinol-cytochrome c oxidoreductase (cytochrome b-c1 complex, complex III, CIII). Requires Cu cation as cofactor.

It is found in the mitochondrion inner membrane. It carries out the reaction 4 Fe(II)-[cytochrome c] + O2 + 8 H(+)(in) = 4 Fe(III)-[cytochrome c] + 2 H2O + 4 H(+)(out). Functionally, component of the cytochrome c oxidase, the last enzyme in the mitochondrial electron transport chain which drives oxidative phosphorylation. The respiratory chain contains 3 multisubunit complexes succinate dehydrogenase (complex II, CII), ubiquinol-cytochrome c oxidoreductase (cytochrome b-c1 complex, complex III, CIII) and cytochrome c oxidase (complex IV, CIV), that cooperate to transfer electrons derived from NADH and succinate to molecular oxygen, creating an electrochemical gradient over the inner membrane that drives transmembrane transport and the ATP synthase. Cytochrome c oxidase is the component of the respiratory chain that catalyzes the reduction of oxygen to water. Electrons originating from reduced cytochrome c in the intermembrane space (IMS) are transferred via the dinuclear copper A center (CU(A)) of subunit 2 and heme A of subunit 1 to the active site in subunit 1, a binuclear center (BNC) formed by heme A3 and copper B (CU(B)). The BNC reduces molecular oxygen to 2 water molecules using 4 electrons from cytochrome c in the IMS and 4 protons from the mitochondrial matrix. This is Cytochrome c oxidase subunit 2 (mt:CoII) from Drosophila bifasciata (Fruit fly).